The primary structure comprises 76 residues: Exodeoxyribonuclease 7 small subunit (76 aa).

The protein belongs to the XseB family. As to quaternary structure, heterooligomer composed of large and small subunits.

The protein resides in the cytoplasm. The enzyme catalyses Exonucleolytic cleavage in either 5'- to 3'- or 3'- to 5'-direction to yield nucleoside 5'-phosphates.. In terms of biological role, bidirectionally degrades single-stranded DNA into large acid-insoluble oligonucleotides, which are then degraded further into small acid-soluble oligonucleotides. The protein is Exodeoxyribonuclease 7 small subunit of Bacillus cereus (strain G9842).